Here is a 147-residue protein sequence, read N- to C-terminus: Hemoglobin subunit gamma-1 (147 aa).

G2 bears the N-acetylglycine mark. The Globin domain maps to H3–H147. A Phosphothreonine modification is found at T13. S45, S51, and S53 each carry phosphoserine. Position 60 is an N6-acetyllysine (K60). Residue H64 coordinates heme b. An N6-acetyllysine modification is found at K83. H93 is a heme b binding site. C94 bears the S-nitrosocysteine mark. S140 is modified (phosphoserine).

This sequence belongs to the globin family. In terms of assembly, heterotetramer of two alpha chains and two gamma chains in fetal hemoglobin (Hb F). In terms of tissue distribution, red blood cells.

In terms of biological role, gamma chains make up the fetal hemoglobin F, in combination with alpha chains. The polypeptide is Hemoglobin subunit gamma-1 (HBG1) (Pongo pygmaeus (Bornean orangutan)).